Here is a 177-residue protein sequence, read N- to C-terminus: Large ribosomal subunit protein uL6 (177 aa).

It belongs to the universal ribosomal protein uL6 family. Part of the 50S ribosomal subunit.

This protein binds to the 23S rRNA, and is important in its secondary structure. It is located near the subunit interface in the base of the L7/L12 stalk, and near the tRNA binding site of the peptidyltransferase center. The sequence is that of Large ribosomal subunit protein uL6 from Histophilus somni (strain 2336) (Haemophilus somnus).